Reading from the N-terminus, the 208-residue chain is MKNIHCINHPLIEHKLGILRAKETKPFQFRMLIDEISSFLLFEASKDFSLKEIEISTPIQKTTVKKLDEKIMICPILRAALGMLESVFKMIPDASVGFLGFVRNEETLKADFYFQKLPKDAKKRTAIVIDPMFATGGTAIDACNFLKSQGVKKIKFISILAAPQGLKKFSQMHDDVEVFVACIDEGLNEKGYIIPGLGDAGDRVFNTL.

5-phospho-alpha-D-ribose 1-diphosphate is bound by residues Arg78, Arg103, and 130-138; that span reads DPMFATGGT. Uracil is bound by residues Ile193 and 198–200; that span reads GDA. 5-phospho-alpha-D-ribose 1-diphosphate is bound at residue Asp199.

Belongs to the UPRTase family. Mg(2+) serves as cofactor.

It catalyses the reaction UMP + diphosphate = 5-phospho-alpha-D-ribose 1-diphosphate + uracil. The protein operates within pyrimidine metabolism; UMP biosynthesis via salvage pathway; UMP from uracil: step 1/1. Its activity is regulated as follows. Allosterically activated by GTP. Functionally, catalyzes the conversion of uracil and 5-phospho-alpha-D-ribose 1-diphosphate (PRPP) to UMP and diphosphate. The polypeptide is Uracil phosphoribosyltransferase (Campylobacter jejuni subsp. jejuni serotype O:2 (strain ATCC 700819 / NCTC 11168)).